Here is a 180-residue protein sequence, read N- to C-terminus: NADH-quinone oxidoreductase subunit I (180 aa).

4Fe-4S ferredoxin-type domains follow at residues 50-80 (LTRDPDGEERCVACNLCAVACPVGCISLQKA) and 90-119 (EFFRINFSRCIFCGLCEEACPTTAIQLTPD). Residues Cys60, Cys63, Cys66, Cys70, Cys99, Cys102, Cys105, and Cys109 each coordinate [4Fe-4S] cluster.

Belongs to the complex I 23 kDa subunit family. As to quaternary structure, NDH-1 is composed of 13 different subunits. Subunits NuoA, H, J, K, L, M, N constitute the membrane sector of the complex. The cofactor is [4Fe-4S] cluster.

Its subcellular location is the cell inner membrane. The catalysed reaction is a quinone + NADH + 5 H(+)(in) = a quinol + NAD(+) + 4 H(+)(out). Its function is as follows. NDH-1 shuttles electrons from NADH, via FMN and iron-sulfur (Fe-S) centers, to quinones in the respiratory chain. The immediate electron acceptor for the enzyme in this species is believed to be ubiquinone. Couples the redox reaction to proton translocation (for every two electrons transferred, four hydrogen ions are translocated across the cytoplasmic membrane), and thus conserves the redox energy in a proton gradient. The polypeptide is NADH-quinone oxidoreductase subunit I (Yersinia enterocolitica serotype O:8 / biotype 1B (strain NCTC 13174 / 8081)).